The chain runs to 897 residues: Ubiquitin carboxyl-terminal hydrolase 33 (897 aa).

The UBP-type zinc finger occupies 7 to 110 (NDCPHLECVG…KQLPNAAKAV (104 aa)). Zn(2+) is bound by residues C9, H11, C31, C34, C44, C49, C54, H61, H65, H71, C84, and C87. Residues 156-670 (TGLKNIGNTC…EAYVLFYKKS (515 aa)) enclose the USP domain. The Nucleophile role is filled by C165. Disordered stretches follow at residues 261-308 (LIPE…GPRV) and 343-420 (GSHG…HKKV). Residues 287 to 297 (DDFQSCESCGS) are compositionally biased toward polar residues. Basic and acidic residues-rich tracts occupy residues 299–308 (DRADNEGPRV) and 344–353 (SHGDLDKDVD). Residues 355 to 396 (TSDSRPIISSQGAIKAQGRTSDSEIQVSSTVRPQSPTGNEGI) show a composition bias toward polar residues. Low complexity predominate over residues 398 to 411 (SRLSSSPPKSSAWP). The active-site Proton acceptor is H628. DUSP domains lie at 672–765 (DETQ…LYVC) and 773–876 (EKLE…RPSV). Residues 875 to 884 (SVSHQESETS) are compositionally biased toward low complexity. A disordered region spans residues 875 to 897 (SVSHQESETSQSEEKIEVETRTV). Positions 886-897 (SEEKIEVETRTV) are enriched in basic and acidic residues.

This sequence belongs to the peptidase C19 family. USP20/USP33 subfamily.

Its subcellular location is the cytoplasm. The protein resides in the perinuclear region. It localises to the cytoskeleton. The protein localises to the microtubule organizing center. It is found in the centrosome. It catalyses the reaction Thiol-dependent hydrolysis of ester, thioester, amide, peptide and isopeptide bonds formed by the C-terminal Gly of ubiquitin (a 76-residue protein attached to proteins as an intracellular targeting signal).. Its function is as follows. Deubiquitinating enzyme involved in various processes such as centrosome duplication, cellular migration and beta-2 adrenergic receptor/ADRB2 recycling. Involved in regulation of centrosome duplication by mediating deubiquitination of ccp110 in S and G2/M phase, leading to stabilize ccp110 during the period which centrioles duplicate and elongate. Involved in cell migration via its interaction with intracellular domain of robo1, leading to regulate the Slit signaling. Plays a role in commissural axon guidance cross the ventral midline of the neural tube in a Slit-dependent manner, possibly by mediating the deubiquitination of robo1. Acts as a regulator of G-protein coupled receptor (GPCR) signaling by mediating the deubiquitination of beta-arrestins (arrb1 and arrb2) and beta-2 adrenergic receptor (adrb2). Deubiquitinates dio2, thereby regulating thyroid hormone regulation. Mediates deubiquitination of both 'Lys-48'- and 'Lys-63'-linked polyubiquitin chains. This is Ubiquitin carboxyl-terminal hydrolase 33 (usp33) from Danio rerio (Zebrafish).